The primary structure comprises 147 residues: Lysozyme C-1 (147 aa).

Positions 1–18 (MKALIILGFLFLSVAVQG) are cleaved as a signal peptide. The C-type lysozyme domain maps to 19–147 (KVFERCELAR…VSSYVEGCTL (129 aa)). Disulfide bonds link cysteine 24-cysteine 145, cysteine 48-cysteine 133, cysteine 83-cysteine 99, and cysteine 95-cysteine 113. Catalysis depends on residues glutamate 53 and aspartate 71.

It belongs to the glycosyl hydrolase 22 family. As to quaternary structure, monomer. In terms of tissue distribution, stomach-specific.

It catalyses the reaction Hydrolysis of (1-&gt;4)-beta-linkages between N-acetylmuramic acid and N-acetyl-D-glucosamine residues in a peptidoglycan and between N-acetyl-D-glucosamine residues in chitodextrins.. Its function is as follows. Lysozymes have primarily a bacteriolytic function; those in tissues and body fluids are associated with the monocyte-macrophage system and enhance the activity of immunoagents. The chain is Lysozyme C-1 (LYZ1) from Bos taurus (Bovine).